Reading from the N-terminus, the 104-residue chain is ATP-dependent Clp protease adapter protein ClpS (104 aa).

It belongs to the ClpS family. In terms of assembly, binds to the N-terminal domain of the chaperone ClpA.

Involved in the modulation of the specificity of the ClpAP-mediated ATP-dependent protein degradation. This is ATP-dependent Clp protease adapter protein ClpS from Neisseria gonorrhoeae (strain ATCC 700825 / FA 1090).